The primary structure comprises 220 residues: Iron-sulfur cluster repair protein YtfE (220 aa).

It belongs to the RIC family. YtfE subfamily. Homodimer.

The protein resides in the cytoplasm. In terms of biological role, di-iron-containing protein involved in the repair of iron-sulfur clusters damaged by oxidative and nitrosative stress conditions. The protein is Iron-sulfur cluster repair protein YtfE of Escherichia coli O157:H7.